A 420-amino-acid chain; its full sequence is Carbohydrate sulfotransferase 12 (420 aa).

At 1–5 (MAKSR) the chain is on the cytoplasmic side. A helical; Signal-anchor for type II membrane protein membrane pass occupies residues 6 to 26 (LFCLLVALGSVFMILFIIVYW). Residues 27–420 (DNVGTANLNL…YPKPDDLLSV (394 aa)) lie on the Lumenal side of the membrane. N-linked (GlcNAc...) asparagine glycans are attached at residues N76 and N139. Residue 176–182 (PKVACTN) participates in 3'-phosphoadenylyl sulfate binding. A glycan (N-linked (GlcNAc...) asparagine) is linked at N215. 251–259 (RDPFVRLIS) provides a ligand contact to 3'-phosphoadenylyl sulfate. 2 N-linked (GlcNAc...) asparagine glycosylation sites follow: N286 and N376.

The protein belongs to the sulfotransferase 2 family.

The protein resides in the golgi apparatus membrane. It carries out the reaction chondroitin beta-D-glucuronate + n 3'-phosphoadenylyl sulfate = chondroitin 4'-sulfate + n adenosine 3',5'-bisphosphate + n H(+). Catalyzes the transfer of sulfate to position 4 of the N-acetylgalactosamine (GalNAc) residue of chondroitin and desulfated dermatan sulfate. Chondroitin sulfate constitutes the predominant proteoglycan present in cartilage and is distributed on the surfaces of many cells and extracellular matrices. The polypeptide is Carbohydrate sulfotransferase 12 (chst12) (Xenopus laevis (African clawed frog)).